The chain runs to 309 residues: Olfactory receptor 14A16 (309 aa).

At 1–23 the chain is on the extracellular side; sequence MANLTIVTEFILMGFSTNKNMCI. An N-linked (GlcNAc...) asparagine glycan is attached at Asn3. A helical transmembrane segment spans residues 24–44; the sequence is LHSILFLLIYLCALMGNVLII. The Cytoplasmic segment spans residues 45–52; it reads MITTLDHH. Residues 53–73 traverse the membrane as a helical segment; the sequence is LHTPVYFFLKNLSFLDLCLIS. Residues 74-97 are Extracellular-facing; that stretch reads VTAPKSIANSLIHNNSISFLGCVS. A glycan (N-linked (GlcNAc...) asparagine) is linked at Asn87. Residues Cys95 and Cys187 are joined by a disulfide bond. A helical transmembrane segment spans residues 98-118; sequence QVFLLLSSASAELLLLTVMSF. Topologically, residues 119 to 131 are cytoplasmic; the sequence is DRYTAICHPLHYD. A helical transmembrane segment spans residues 132 to 152; sequence VIMDRSTCVQRATVSWLYGGL. The Extracellular portion of the chain corresponds to 153–194; sequence IAVMHTAGTFSLSYCGSNMVHQFFCDIPQLLAISCSENLIRE. Residues 195-215 traverse the membrane as a helical segment; that stretch reads IALILINVVLDFCCFIVIIIT. Topologically, residues 216-235 are cytoplasmic; sequence YVHVFSTVKKIPSTEGQSKA. The chain crosses the membrane as a helical span at residues 236 to 255; that stretch reads YSICLPHLLVVLFLSTGFIA. Residues 256-268 are Extracellular-facing; that stretch reads YLKPASESPSILD. The helical transmembrane segment at 269–289 threads the bilayer; sequence AVISVFYTMLPPTFNPIIYSL. The Cytoplasmic segment spans residues 290–309; it reads RNKAIKVALGMLIKGKLTKK.

Belongs to the G-protein coupled receptor 1 family.

The protein resides in the cell membrane. In terms of biological role, odorant receptor. The protein is Olfactory receptor 14A16 (OR14A16) of Homo sapiens (Human).